A 368-amino-acid polypeptide reads, in one-letter code: Dihydroorotate dehydrogenase (quinone) (368 aa).

FMN-binding positions include 67–71 and threonine 91; that span reads AGFDK. Lysine 71 serves as a coordination point for substrate. A substrate-binding site is contributed by 116-120; it reads NRMGF. 2 residues coordinate FMN: asparagine 146 and asparagine 179. Position 179 (asparagine 179) interacts with substrate. The active-site Nucleophile is the serine 182. Asparagine 184 provides a ligand contact to substrate. FMN contacts are provided by lysine 222 and threonine 250. Position 251-252 (251-252) interacts with substrate; sequence NT. Residues glycine 276, glycine 305, and 326-327 contribute to the FMN site; that span reads YS.

The protein belongs to the dihydroorotate dehydrogenase family. Type 2 subfamily. As to quaternary structure, monomer. The cofactor is FMN.

The protein localises to the cell membrane. It catalyses the reaction (S)-dihydroorotate + a quinone = orotate + a quinol. It participates in pyrimidine metabolism; UMP biosynthesis via de novo pathway; orotate from (S)-dihydroorotate (quinone route): step 1/1. Its function is as follows. Catalyzes the conversion of dihydroorotate to orotate with quinone as electron acceptor. The polypeptide is Dihydroorotate dehydrogenase (quinone) (Streptomyces avermitilis (strain ATCC 31267 / DSM 46492 / JCM 5070 / NBRC 14893 / NCIMB 12804 / NRRL 8165 / MA-4680)).